Consider the following 93-residue polypeptide: Pyrimidine/purine nucleoside phosphorylase (93 aa).

This sequence belongs to the nucleoside phosphorylase PpnP family.

It carries out the reaction a purine D-ribonucleoside + phosphate = a purine nucleobase + alpha-D-ribose 1-phosphate. The catalysed reaction is adenosine + phosphate = alpha-D-ribose 1-phosphate + adenine. It catalyses the reaction cytidine + phosphate = cytosine + alpha-D-ribose 1-phosphate. The enzyme catalyses guanosine + phosphate = alpha-D-ribose 1-phosphate + guanine. It carries out the reaction inosine + phosphate = alpha-D-ribose 1-phosphate + hypoxanthine. The catalysed reaction is thymidine + phosphate = 2-deoxy-alpha-D-ribose 1-phosphate + thymine. It catalyses the reaction uridine + phosphate = alpha-D-ribose 1-phosphate + uracil. The enzyme catalyses xanthosine + phosphate = alpha-D-ribose 1-phosphate + xanthine. Its function is as follows. Catalyzes the phosphorolysis of diverse nucleosides, yielding D-ribose 1-phosphate and the respective free bases. Can use uridine, adenosine, guanosine, cytidine, thymidine, inosine and xanthosine as substrates. Also catalyzes the reverse reactions. The sequence is that of Pyrimidine/purine nucleoside phosphorylase from Vibrio atlanticus (strain LGP32) (Vibrio splendidus (strain Mel32)).